The primary structure comprises 116 residues: Large ribosomal subunit protein bL19 (116 aa).

It belongs to the bacterial ribosomal protein bL19 family.

Functionally, this protein is located at the 30S-50S ribosomal subunit interface and may play a role in the structure and function of the aminoacyl-tRNA binding site. In Azotobacter vinelandii (strain DJ / ATCC BAA-1303), this protein is Large ribosomal subunit protein bL19.